Consider the following 576-residue polypeptide: Arginine--tRNA ligase (576 aa).

Residues 126–136 carry the 'HIGH' region motif; it reads ANPTGPMHIGH.

Belongs to the class-I aminoacyl-tRNA synthetase family. Monomer.

It localises to the cytoplasm. It carries out the reaction tRNA(Arg) + L-arginine + ATP = L-arginyl-tRNA(Arg) + AMP + diphosphate. The sequence is that of Arginine--tRNA ligase from Rickettsia rickettsii (strain Iowa).